Consider the following 302-residue polypeptide: 33 kDa chaperonin (302 aa).

2 disulfide bridges follow: C234-C236 and C267-C270.

It belongs to the HSP33 family. Post-translationally, under oxidizing conditions two disulfide bonds are formed involving the reactive cysteines. Under reducing conditions zinc is bound to the reactive cysteines and the protein is inactive.

It localises to the cytoplasm. In terms of biological role, redox regulated molecular chaperone. Protects both thermally unfolding and oxidatively damaged proteins from irreversible aggregation. Plays an important role in the bacterial defense system toward oxidative stress. The chain is 33 kDa chaperonin from Neisseria gonorrhoeae (strain NCCP11945).